The primary structure comprises 80 residues: MKVSCEDVNGPRSSLGRAWNHVSWLYYQYLLVTALYMLEPWERTVFNSMLVSIVGMALYTGYIFMPQHILAILHYFEIVQ.

The Cytoplasmic portion of the chain corresponds to 1–21 (MKVSCEDVNGPRSSLGRAWNH). A helical transmembrane segment spans residues 22–38 (VSWLYYQYLLVTALYML). At 39 to 43 (EPWER) the chain is on the lumenal side. Residues 44-66 (TVFNSMLVSIVGMALYTGYIFMP) traverse the membrane as a helical segment. Over 67 to 80 (QHILAILHYFEIVQ) the chain is Cytoplasmic.

Belongs to the SPTSS family. SPTSSA subfamily. Component of the serine palmitoyltransferase (SPT) complex, which is composed of SPTLC1, SPTLC2 or SPTLC3 and SPTSSA or SPTSSB. The heterodimer consisting of SPTLC1 and SPTLC2/SPTLC3 forms the catalytic core of the enzyme, while SPTSSA or SPTSSB subunits determine substrate specificity. SPT also interacts with ORMDL proteins, especially ORMDL3, which negatively regulate SPT activity in the presence of ceramides.

It localises to the endoplasmic reticulum membrane. Its pathway is lipid metabolism; sphingolipid metabolism. Functionally, component of the serine palmitoyltransferase multisubunit enzyme (SPT) that catalyzes the initial and rate-limiting step in sphingolipid biosynthesis by condensing L-serine and activated acyl-CoA (most commonly palmitoyl-CoA) to form long-chain bases. The SPT complex is composed of SPTLC1, SPTLC2 or SPTLC3 and SPTSSA or SPTSSB. Within this complex, the heterodimer consisting of SPTLC1 and SPTLC2/SPTLC3 forms the catalytic core. Within the SPT complex, SPTSSA stimulates the catalytic activity and plays a role in substrate specificity, which depends upon the overall complex composition. The SPTLC1-SPTLC2-SPTSSA complex shows a strong preference for C16-CoA substrate, while the SPTLC1-SPTLC3-SPTSSA isozyme uses both C14-CoA and C16-CoA as substrates, with a slight preference for C14-CoA. Independently of its action as a SPT component, may be involved in MBOAT7 localization to mitochondria-associated membranes, a membrane bridge between the endoplasmic reticulum and mitochondria, may hence affect MBOAT7-catalyzed incorporation of arachidonic acid into phosphatidylinositol. This chain is Serine palmitoyltransferase small subunit A-B (sptssa-b), found in Xenopus laevis (African clawed frog).